The primary structure comprises 331 residues: Large ribosomal subunit protein uL3 (331 aa).

Belongs to the universal ribosomal protein uL3 family. Part of the 50S ribosomal subunit. Forms a cluster with proteins L14 and L24e.

Functionally, one of the primary rRNA binding proteins, it binds directly near the 3'-end of the 23S rRNA, where it nucleates assembly of the 50S subunit. The protein is Large ribosomal subunit protein uL3 of Thermoplasma volcanium (strain ATCC 51530 / DSM 4299 / JCM 9571 / NBRC 15438 / GSS1).